The primary structure comprises 319 residues: Malate dehydrogenase (319 aa).

NAD(+) contacts are provided by residues 10–15 and Asp-34; that span reads GAGNIG. Substrate contacts are provided by Arg-83 and Arg-89. NAD(+) is bound by residues Asn-96 and 119-121; that span reads ITN. 2 residues coordinate substrate: Asn-121 and Arg-152. Residue His-176 is the Proton acceptor of the active site.

Belongs to the LDH/MDH superfamily. MDH type 3 family.

It carries out the reaction (S)-malate + NAD(+) = oxaloacetate + NADH + H(+). In terms of biological role, catalyzes the reversible oxidation of malate to oxaloacetate. The chain is Malate dehydrogenase from Francisella tularensis subsp. tularensis (strain FSC 198).